Reading from the N-terminus, the 187-residue chain is Large ribosomal subunit protein uL5 (187 aa).

It belongs to the universal ribosomal protein uL5 family. Part of the 50S ribosomal subunit; part of the 5S rRNA/L5/L18/L25 subcomplex. Contacts the 5S rRNA and the P site tRNA. Forms a bridge to the 30S subunit in the 70S ribosome.

Its function is as follows. This is one of the proteins that bind and probably mediate the attachment of the 5S RNA into the large ribosomal subunit, where it forms part of the central protuberance. In the 70S ribosome it contacts protein S13 of the 30S subunit (bridge B1b), connecting the 2 subunits; this bridge is implicated in subunit movement. Contacts the P site tRNA; the 5S rRNA and some of its associated proteins might help stabilize positioning of ribosome-bound tRNAs. This is Large ribosomal subunit protein uL5 from Mycobacterium bovis (strain ATCC BAA-935 / AF2122/97).